The primary structure comprises 136 residues: Small ribosomal subunit protein uS19 (136 aa).

The protein belongs to the universal ribosomal protein uS19 family.

In terms of biological role, protein S19 forms a complex with S13 that binds strongly to the 16S ribosomal RNA. The sequence is that of Small ribosomal subunit protein uS19 from Methanocorpusculum labreanum (strain ATCC 43576 / DSM 4855 / Z).